The chain runs to 205 residues: LexA repressor (205 aa).

The H-T-H motif DNA-binding region spans 28-48 (RAELMRAFDFRSPNAAESHLR). Catalysis depends on for autocatalytic cleavage activity residues Ser-120 and Lys-159.

This sequence belongs to the peptidase S24 family. As to quaternary structure, homodimer.

The catalysed reaction is Hydrolysis of Ala-|-Gly bond in repressor LexA.. Represses a number of genes involved in the response to DNA damage (SOS response), including recA and lexA. In the presence of single-stranded DNA, RecA interacts with LexA causing an autocatalytic cleavage which disrupts the DNA-binding part of LexA, leading to derepression of the SOS regulon and eventually DNA repair. This Acidithiobacillus ferrooxidans (strain ATCC 23270 / DSM 14882 / CIP 104768 / NCIMB 8455) (Ferrobacillus ferrooxidans (strain ATCC 23270)) protein is LexA repressor.